A 190-amino-acid chain; its full sequence is Xanthine phosphoribosyltransferase (190 aa).

Xanthine is bound by residues L20 and N27. Position 129–133 (129–133 (ANGAA)) interacts with 5-phospho-alpha-D-ribose 1-diphosphate. Position 157 (K157) interacts with xanthine.

Belongs to the purine/pyrimidine phosphoribosyltransferase family. Xpt subfamily. As to quaternary structure, homodimer.

It localises to the cytoplasm. It carries out the reaction XMP + diphosphate = xanthine + 5-phospho-alpha-D-ribose 1-diphosphate. The protein operates within purine metabolism; XMP biosynthesis via salvage pathway; XMP from xanthine: step 1/1. Converts the preformed base xanthine, a product of nucleic acid breakdown, to xanthosine 5'-monophosphate (XMP), so it can be reused for RNA or DNA synthesis. The sequence is that of Xanthine phosphoribosyltransferase from Laribacter hongkongensis (strain HLHK9).